Reading from the N-terminus, the 170-residue chain is Phosphothreonine lyase OspF (170 aa).

Residue H82 is the Proton donor of the active site. K112 functions as the Proton acceptor in the catalytic mechanism.

This sequence belongs to the phosphothreonine lyase family.

The protein localises to the secreted. Functionally, catalyzes the removal of the phosphate group from the phosphothreonine in the mitogen-activated protein kinases such as MAPK2/ERK2, MAPK3/ERK1, MAPK8 and MAPK14 in an irreversible reaction, thus preventing the downstream phosphorylation of histone H3. This epigenetic modification results in inhibition of the transcription of a specific subset of pro-inflammatory genes, and ultimately to a reduced immune response against the invading pathogen. The diminished immune response enhances the bacterium's ability to disseminate and multiply within the host. In Shigella boydii, this protein is Phosphothreonine lyase OspF (ospF).